The sequence spans 429 residues: Glucose-1-phosphate adenylyltransferase (429 aa).

Alpha-D-glucose 1-phosphate is bound by residues glycine 162, 177–178 (EK), and serine 209.

The protein belongs to the bacterial/plant glucose-1-phosphate adenylyltransferase family. As to quaternary structure, homotetramer.

The enzyme catalyses alpha-D-glucose 1-phosphate + ATP + H(+) = ADP-alpha-D-glucose + diphosphate. Its pathway is glycan biosynthesis; glycogen biosynthesis. Its function is as follows. Involved in the biosynthesis of ADP-glucose, a building block required for the elongation reactions to produce glycogen. Catalyzes the reaction between ATP and alpha-D-glucose 1-phosphate (G1P) to produce pyrophosphate and ADP-Glc. This chain is Glucose-1-phosphate adenylyltransferase, found in Rippkaea orientalis (strain PCC 8801 / RF-1) (Cyanothece sp. (strain PCC 8801)).